Here is a 336-residue protein sequence, read N- to C-terminus: tRNA N6-adenosine threonylcarbamoyltransferase (336 aa).

The Fe cation site is built by H114 and H118. Residues 136 to 140 (LVSGG), D169, G182, D186, and N275 contribute to the substrate site. D302 contacts Fe cation.

Belongs to the KAE1 / TsaD family. Fe(2+) serves as cofactor.

The protein localises to the cytoplasm. The catalysed reaction is L-threonylcarbamoyladenylate + adenosine(37) in tRNA = N(6)-L-threonylcarbamoyladenosine(37) in tRNA + AMP + H(+). Required for the formation of a threonylcarbamoyl group on adenosine at position 37 (t(6)A37) in tRNAs that read codons beginning with adenine. Is involved in the transfer of the threonylcarbamoyl moiety of threonylcarbamoyl-AMP (TC-AMP) to the N6 group of A37, together with TsaE and TsaB. TsaD likely plays a direct catalytic role in this reaction. The chain is tRNA N6-adenosine threonylcarbamoyltransferase from Streptococcus agalactiae serotype Ia (strain ATCC 27591 / A909 / CDC SS700).